Reading from the N-terminus, the 443-residue chain is Glucose-6-phosphate isomerase (443 aa).

Glu285 serves as the catalytic Proton donor. Residues His306 and Lys420 contribute to the active site.

The protein belongs to the GPI family.

It is found in the cytoplasm. It carries out the reaction alpha-D-glucose 6-phosphate = beta-D-fructose 6-phosphate. The protein operates within carbohydrate biosynthesis; gluconeogenesis. It participates in carbohydrate degradation; glycolysis; D-glyceraldehyde 3-phosphate and glycerone phosphate from D-glucose: step 2/4. Catalyzes the reversible isomerization of glucose-6-phosphate to fructose-6-phosphate. This Staphylococcus aureus (strain Mu3 / ATCC 700698) protein is Glucose-6-phosphate isomerase.